The chain runs to 278 residues: Pantothenate synthetase (278 aa).

31-38 (MGALHEGH) contributes to the ATP binding site. H38 functions as the Proton donor in the catalytic mechanism. Q62 serves as a coordination point for (R)-pantoate. Q62 provides a ligand contact to beta-alanine. 148 to 151 (GEKD) lines the ATP pocket. Position 154 (Q154) interacts with (R)-pantoate. ATP is bound by residues L177 and 185–188 (MSSR).

The protein belongs to the pantothenate synthetase family. As to quaternary structure, homodimer.

The protein resides in the cytoplasm. The catalysed reaction is (R)-pantoate + beta-alanine + ATP = (R)-pantothenate + AMP + diphosphate + H(+). The protein operates within cofactor biosynthesis; (R)-pantothenate biosynthesis; (R)-pantothenate from (R)-pantoate and beta-alanine: step 1/1. Its function is as follows. Catalyzes the condensation of pantoate with beta-alanine in an ATP-dependent reaction via a pantoyl-adenylate intermediate. This Acidiphilium cryptum (strain JF-5) protein is Pantothenate synthetase.